A 443-amino-acid polypeptide reads, in one-letter code: MSKTYHFIGIKGSGMSALALMLHQMGHNVQGSDVDKYYFTQRGLEQAGVTILPFSPNNISEDLEIIAGNAFRPDNNEELAYVIEKGYHFKRYHEFLGDFMRQFTSLGVAGAHGKTSTTGLLAHVLKNITDTSFLIGDGTGRGSANANYFVFEADEYERHFMPYHPEYSIITNIDFDHPDYFTGLEDVFNAFNDYAKQVQKGLFIYGEDSKLHEITSKAPIYYYGFEDSNDFIAKDITRTVNGSDFKVFYNQEEIGQFHVPAYGKHNILNATAVIANLYIMGIDMALVAEHLKTFSGVKRRFTEKIIDDTVIIDDFAHHPTEIIATLDAARQKYPSKEIVAIFQPHTFTRTIALLDDFAHALSQADSVYLAQIYGSAREVDNGEVKVEDLAAKIVKHSDLVTVENVSPLLNHDNAVYVFMGAGDIQLYERSFEELLANLTKNTQ.

110-116 (GAHGKTS) provides a ligand contact to ATP.

The protein belongs to the MurCDEF family.

Its subcellular location is the cytoplasm. It catalyses the reaction UDP-N-acetyl-alpha-D-muramate + L-alanine + ATP = UDP-N-acetyl-alpha-D-muramoyl-L-alanine + ADP + phosphate + H(+). Its pathway is cell wall biogenesis; peptidoglycan biosynthesis. Its function is as follows. Cell wall formation. This Streptococcus agalactiae serotype III (strain NEM316) protein is UDP-N-acetylmuramate--L-alanine ligase.